The chain runs to 208 residues: Uracil phosphoribosyltransferase (208 aa).

Residues Arg-78, Arg-103, and 130–138 (DPMLATGGS) contribute to the 5-phospho-alpha-D-ribose 1-diphosphate site. Residues Ile-193 and 198-200 (GDA) each bind uracil. 5-phospho-alpha-D-ribose 1-diphosphate is bound at residue Asp-199.

The protein belongs to the UPRTase family. Requires Mg(2+) as cofactor.

It catalyses the reaction UMP + diphosphate = 5-phospho-alpha-D-ribose 1-diphosphate + uracil. Its pathway is pyrimidine metabolism; UMP biosynthesis via salvage pathway; UMP from uracil: step 1/1. With respect to regulation, allosterically activated by GTP. Functionally, catalyzes the conversion of uracil and 5-phospho-alpha-D-ribose 1-diphosphate (PRPP) to UMP and diphosphate. The polypeptide is Uracil phosphoribosyltransferase (Shewanella woodyi (strain ATCC 51908 / MS32)).